The chain runs to 81 residues: Ferredoxin (81 aa).

Residues 2–30 (KYTIVDKETCIACGACGAAAPDIYDYDED) form the 4Fe-4S ferredoxin-type domain. [4Fe-4S] cluster-binding residues include Cys11, Cys14, Cys17, and Cys61.

[4Fe-4S] cluster is required as a cofactor.

Functionally, ferredoxins are iron-sulfur proteins that transfer electrons in a wide variety of metabolic reactions. The polypeptide is Ferredoxin (fer) (Geobacillus stearothermophilus (Bacillus stearothermophilus)).